Reading from the N-terminus, the 114-residue chain is UPF0342 protein SH1117 (114 aa).

This sequence belongs to the UPF0342 family.

The polypeptide is UPF0342 protein SH1117 (Staphylococcus haemolyticus (strain JCSC1435)).